Consider the following 176-residue polypeptide: Cell division protein ZapC (176 aa).

This sequence belongs to the ZapC family. Interacts directly with FtsZ.

The protein localises to the cytoplasm. Its function is as follows. Contributes to the efficiency of the cell division process by stabilizing the polymeric form of the cell division protein FtsZ. Acts by promoting interactions between FtsZ protofilaments and suppressing the GTPase activity of FtsZ. The chain is Cell division protein ZapC from Pseudoalteromonas translucida (strain TAC 125).